We begin with the raw amino-acid sequence, 201 residues long: Small ribosomal subunit protein uS4 (201 aa).

Residues M1 to R38 form a disordered region. The S4 RNA-binding domain occupies S91 to A157.

Belongs to the universal ribosomal protein uS4 family. As to quaternary structure, part of the 30S ribosomal subunit. Contacts protein S5. The interaction surface between S4 and S5 is involved in control of translational fidelity.

In terms of biological role, one of the primary rRNA binding proteins, it binds directly to 16S rRNA where it nucleates assembly of the body of the 30S subunit. Functionally, with S5 and S12 plays an important role in translational accuracy. The polypeptide is Small ribosomal subunit protein uS4 (Mycobacterium sp. (strain JLS)).